A 318-amino-acid polypeptide reads, in one-letter code: Acetyl-coenzyme A carboxylase carboxyl transferase subunit alpha (318 aa).

In terms of domain architecture, CoA carboxyltransferase C-terminal spans 31–292 (DLTNEIEKLE…NKTITKSLHA (262 aa)).

The protein belongs to the AccA family. Acetyl-CoA carboxylase is a heterohexamer composed of biotin carboxyl carrier protein (AccB), biotin carboxylase (AccC) and two subunits each of ACCase subunit alpha (AccA) and ACCase subunit beta (AccD).

It localises to the cytoplasm. The enzyme catalyses N(6)-carboxybiotinyl-L-lysyl-[protein] + acetyl-CoA = N(6)-biotinyl-L-lysyl-[protein] + malonyl-CoA. Its pathway is lipid metabolism; malonyl-CoA biosynthesis; malonyl-CoA from acetyl-CoA: step 1/1. Its function is as follows. Component of the acetyl coenzyme A carboxylase (ACC) complex. First, biotin carboxylase catalyzes the carboxylation of biotin on its carrier protein (BCCP) and then the CO(2) group is transferred by the carboxyltransferase to acetyl-CoA to form malonyl-CoA. This chain is Acetyl-coenzyme A carboxylase carboxyl transferase subunit alpha, found in Listeria monocytogenes serotype 4a (strain HCC23).